The following is a 235-amino-acid chain: Regulator of G-protein signaling 18 (235 aa).

A Phosphoserine modification is found at S49. The RGS domain occupies 86 to 202 (SFDKLLSHRD…LKSDIYLDLM (117 aa)). Phosphoserine occurs at positions 216 and 218.

In terms of tissue distribution, expressed in peripheral leukocytes, bone marrow, platelet, spleen and fetal liver.

Its subcellular location is the cytoplasm. Functionally, inhibits signal transduction by increasing the GTPase activity of G protein alpha subunits thereby driving them into their inactive GDP-bound form. Binds to G(i) alpha-1, G(i) alpha-2, G(i) alpha-3 and G(q) alpha. The chain is Regulator of G-protein signaling 18 (RGS18) from Homo sapiens (Human).